The sequence spans 551 residues: Cytosolic Fe-S cluster assembly factor NAR1 (551 aa).

Cys20, Cys57, Cys60, Cys63, Cys178, and Cys242 together coordinate [4Fe-4S] cluster. The segment at 395–435 is disordered; sequence DPSGHKKRSVRRVAALRSRGRKDSSSEDSTGTPSAISNALG. A compositionally biased stretch (polar residues) spans 421 to 431; the sequence is EDSTGTPSAIS. A [4Fe-4S] cluster-binding site is contributed by Cys451.

This sequence belongs to the NARF family.

In terms of biological role, component of the cytosolic Fe/S protein assembly machinery. Required for maturation of extramitochondrial Fe/S proteins. May play a role in the transfer of pre-assembled Fe/S clusters to target apoproteins. In Candida glabrata (strain ATCC 2001 / BCRC 20586 / JCM 3761 / NBRC 0622 / NRRL Y-65 / CBS 138) (Yeast), this protein is Cytosolic Fe-S cluster assembly factor NAR1 (NAR1).